A 208-amino-acid chain; its full sequence is Truncated thymidylate kinase (208 aa).

It belongs to the thymidylate kinase family.

Its function is as follows. Catalyzes the conversion of dTMP to dTDP. The protein is Truncated thymidylate kinase (TMK) of Ornithodoros (relapsing fever ticks).